Here is a 124-residue protein sequence, read N- to C-terminus: Fluoride-specific ion channel FluC 2 (124 aa).

4 helical membrane passes run 1 to 21 (MSDI…RFQI), 34 to 54 (FLIL…LSLV), 66 to 86 (LILF…SFVY), and 103 to 123 (LFII…FLGT). 2 residues coordinate Na(+): glycine 76 and serine 79.

It belongs to the fluoride channel Fluc/FEX (TC 1.A.43) family.

The protein localises to the cell inner membrane. It catalyses the reaction fluoride(in) = fluoride(out). With respect to regulation, na(+) is not transported, but it plays an essential structural role and its presence is essential for fluoride channel function. In terms of biological role, fluoride-specific ion channel. Important for reducing fluoride concentration in the cell, thus reducing its toxicity. The sequence is that of Fluoride-specific ion channel FluC 2 from Prochlorococcus marinus (strain NATL2A).